Reading from the N-terminus, the 510-residue chain is 2,3-bisphosphoglycerate-independent phosphoglycerate mutase (510 aa).

Mn(2+) is bound by residues Asp-14 and Ser-64. Catalysis depends on Ser-64, which acts as the Phosphoserine intermediate. Substrate contacts are provided by residues His-125, 155–156 (RD), Arg-187, Arg-193, 259–262 (RADR), and Lys-332. Mn(2+) is bound by residues Asp-399, His-403, Asp-440, His-441, and His-459.

Belongs to the BPG-independent phosphoglycerate mutase family. In terms of assembly, monomer. Mn(2+) is required as a cofactor.

The catalysed reaction is (2R)-2-phosphoglycerate = (2R)-3-phosphoglycerate. The protein operates within carbohydrate degradation; glycolysis; pyruvate from D-glyceraldehyde 3-phosphate: step 3/5. In terms of biological role, catalyzes the interconversion of 2-phosphoglycerate and 3-phosphoglycerate. Essential for the growth and pathogenicity on the host plant. This Pseudomonas syringae pv. tomato (strain ATCC BAA-871 / DC3000) protein is 2,3-bisphosphoglycerate-independent phosphoglycerate mutase.